The following is a 213-amino-acid chain: LexA repressor (213 aa).

A DNA-binding region (H-T-H motif) is located at residues 27–47 (QTEIARAFGFKGIRAAQYHLE). Active-site for autocatalytic cleavage activity residues include Ser-133 and Lys-170.

It belongs to the peptidase S24 family. Homodimer.

The enzyme catalyses Hydrolysis of Ala-|-Gly bond in repressor LexA.. Its function is as follows. Represses a number of genes involved in the response to DNA damage (SOS response), including recA and lexA. Has been shown to bind to the palindromic sequence 5'-CTG-N(8-12)-C-[TC]-G. In the presence of single-stranded DNA, RecA interacts with LexA causing an autocatalytic cleavage which disrupts the DNA-binding part of LexA, leading to derepression of the SOS regulon and eventually DNA repair. The polypeptide is LexA repressor (Xanthomonas citri (Xanthomonas campestris pv. citri)).